A 218-amino-acid chain; its full sequence is MFGFLKKVVDYTRDAADAANYLIQGLAVTFDHLRRRPITVQYPYEKLIPSERYRGRIHYEFDKCIACEVCVRVCPINLPVVDWVMNKETKKKELRNYSIDFGVCIFCGNCVEYCPTNCLSMTEEYELAAYDRHSLNYDNVALGRLPTSVTTDPSVQPLRELAYLPKGVMDPHDVPANQPRAGQLPAEALKSLSLQQESVQGDEGESLQDASDQDQPSG.

4Fe-4S ferredoxin-type domains follow at residues 55–84 (GRIH…VDWV) and 95–124 (RNYS…MTEE). Positions 64, 67, 70, 74, 104, 107, 110, and 114 each coordinate [4Fe-4S] cluster. The interval 169-218 (MDPHDVPANQPRAGQLPAEALKSLSLQQESVQGDEGESLQDASDQDQPSG) is disordered. The segment covering 208-218 (QDASDQDQPSG) has biased composition (polar residues).

Belongs to the complex I 23 kDa subunit family. In terms of assembly, NDH-1 is composed of at least 11 different subunits. The cofactor is [4Fe-4S] cluster.

The protein localises to the cellular thylakoid membrane. The enzyme catalyses a plastoquinone + NADH + (n+1) H(+)(in) = a plastoquinol + NAD(+) + n H(+)(out). It catalyses the reaction a plastoquinone + NADPH + (n+1) H(+)(in) = a plastoquinol + NADP(+) + n H(+)(out). Functionally, NDH-1 shuttles electrons from an unknown electron donor, via FMN and iron-sulfur (Fe-S) centers, to quinones in the respiratory and/or the photosynthetic chain. The immediate electron acceptor for the enzyme in this species is believed to be plastoquinone. Couples the redox reaction to proton translocation, and thus conserves the redox energy in a proton gradient. The polypeptide is NAD(P)H-quinone oxidoreductase subunit I (Prochlorococcus marinus (strain MIT 9313)).